The sequence spans 388 residues: Glucose-6-phosphate/phosphate translocator 2, chloroplastic (388 aa).

The transit peptide at methionine 1–lysine 68 directs the protein to the chloroplast. 8 helical membrane-spanning segments follow: residues leucine 95–asparagine 115, phenylalanine 122–valine 142, phenylalanine 158–valine 178, phenylalanine 211–isoleucine 231, glutamate 233–phenylalanine 253, leucine 281–tryptophan 301, valine 305–leucine 325, and isoleucine 358–phenylalanine 378. One can recognise an EamA domain in the interval isoleucine 113–isoleucine 231.

The protein belongs to the TPT transporter family. GPT (TC 2.A.7.9) subfamily. Expressed in seeds, flowers, stamens, and rosette leaves, with highest levels found in sepals and senescing leaves.

It is found in the plastid. It localises to the chloroplast membrane. Glucose 6-phosphate (Glc6P) transporter. Also transports inorganic phosphate, 3-phosphoglycerate, triose phosphates and, to a leser extent, phosphoenolpyruvate. Responsible for the transport of Glc6P into plastids of heterotrophic tissues where it can be used as a carbon source for starch biosynthesis, as substrate for fatty acid biosynthesis or as substrate for NADPH generation via the oxidative pentose phosphate pathway (OPPP). Required for dynamic acclimation of photosynthesis and partitioning of Glc6P between the chloroplast and the cytosol. May modulate the sensing of sugar status during early seedling development. This chain is Glucose-6-phosphate/phosphate translocator 2, chloroplastic, found in Arabidopsis thaliana (Mouse-ear cress).